A 180-amino-acid polypeptide reads, in one-letter code: Cytokinin-beta-glucosidase 1 (180 aa).

Its function is as follows. Hydrolyzes cytokinin glucosides thus liberating free cytokinins. The chain is Cytokinin-beta-glucosidase 1 (ROLC1) from Panax ginseng (Korean ginseng).